The chain runs to 369 residues: Choline kinase B2 (369 aa).

This sequence belongs to the choline/ethanolamine kinase family. Mg(2+) serves as cofactor.

It carries out the reaction choline + ATP = phosphocholine + ADP + H(+). It functions in the pathway phospholipid metabolism; phosphatidylcholine biosynthesis; phosphocholine from choline: step 1/1. In terms of biological role, catalyzes the first step in phosphatidylcholine biosynthesis. Phosphorylates choline. The protein is Choline kinase B2 (ckb-2) of Caenorhabditis elegans.